We begin with the raw amino-acid sequence, 121 residues long: Small ribosomal subunit protein uS13 (121 aa).

A disordered region spans residues 94-121 (GLPLRGQRTRTNARTRKGPRRAAQSLKK).

Belongs to the universal ribosomal protein uS13 family. In terms of assembly, part of the 30S ribosomal subunit. Forms a loose heterodimer with protein S19. Forms two bridges to the 50S subunit in the 70S ribosome.

Located at the top of the head of the 30S subunit, it contacts several helices of the 16S rRNA. In the 70S ribosome it contacts the 23S rRNA (bridge B1a) and protein L5 of the 50S subunit (bridge B1b), connecting the 2 subunits; these bridges are implicated in subunit movement. Contacts the tRNAs in the A and P-sites. In Paraburkholderia phytofirmans (strain DSM 17436 / LMG 22146 / PsJN) (Burkholderia phytofirmans), this protein is Small ribosomal subunit protein uS13.